The primary structure comprises 953 residues: Translation initiation factor IF-2 (953 aa).

Disordered stretches follow at residues 48–240 and 279–363; these read SSFS…AQQE and TKLK…TERK. Basic and acidic residues-rich tracts occupy residues 80 to 89, 98 to 111, and 140 to 188; these read TGSEHVEKTQ, FKAE…EQAA, and QGDK…ENHK. A compositionally biased stretch (polar residues) spans 191-207; it reads RFTNQKKQGRQEPQSKS. Residues 229 to 240 are compositionally biased toward basic and acidic residues; sequence RQSETRFRAQQE. Over residues 282-291 the composition is skewed to polar residues; sequence KSSNISAKST. The span at 300-317 shows a compositional bias: basic and acidic residues; sequence ARPEKNRELTHHSQEGQK. Over residues 322–338 the composition is skewed to low complexity; that stretch reads SWNSQNQVRNQKNSNWN. Residues 339-348 are compositionally biased toward basic residues; that stretch reads KNKKTKKGKN. The tr-type G domain maps to 454-623; the sequence is ERAPVVTIMG…LLVAEVEELK (170 aa). The segment at 463-470 is G1; that stretch reads GHVDHGKT. 463–470 serves as a coordination point for GTP; the sequence is GHVDHGKT. The segment at 488-492 is G2; it reads GITQH. The interval 509–512 is G3; that stretch reads DTPG. GTP-binding positions include 509-513 and 563-566; these read DTPGH and NKID. Positions 563–566 are G4; that stretch reads NKID. Positions 599–601 are G5; it reads SAK.

The protein belongs to the TRAFAC class translation factor GTPase superfamily. Classic translation factor GTPase family. IF-2 subfamily.

The protein resides in the cytoplasm. Functionally, one of the essential components for the initiation of protein synthesis. Protects formylmethionyl-tRNA from spontaneous hydrolysis and promotes its binding to the 30S ribosomal subunits. Also involved in the hydrolysis of GTP during the formation of the 70S ribosomal complex. This Streptococcus pyogenes serotype M1 protein is Translation initiation factor IF-2.